We begin with the raw amino-acid sequence, 497 residues long: WASH complex subunit homolog 1 (497 aa).

The segment at 306–497 (EASEPTEAEA…PPNFDDEEWD (192 aa)) is disordered. A compositionally biased stretch (pro residues) spans 323–339 (LPPPPPPMKLDPSPQPA). Residues 341–350 (TPVEITEIPP) show a composition bias toward low complexity. Over residues 351–372 (IISPPAPPPPPPPPPPPPPPQT) the composition is skewed to pro residues. Positions 390–412 (GRSDLMAAIRAAGGAGNAKLSRI) constitute a WH2 domain.

The protein belongs to the WASH1 family. As to quaternary structure, component of the WASH core complex. Component of the DHIC (ddl-1-containing hsf-1 inhibitory) complex, which contains at least ddl-1, ddl-2, hsb-1 and hsf-1. Within the complex, interacts with ddl-1. Formation of the DHIC may be dependent upon the Insulin/IGF-1-like signaling (IIS) mediated pathway. As to expression, expressed in several neurons located throughout the body.

In terms of biological role, acts as a component of the WASH core complex that functions as a nucleation-promoting factor (NPF) at the surface of endosomes, where it recruits and activates the Arp2/3 complex to induce actin polymerization, playing a key role in the fission of tubules that serve as transport intermediates during endosome sorting. Acts as a component of the DHIC (ddl-1-containing hsf-1 inhibitory complex) which modulates lifespan by sequestering the heat shock transcription factor hsf-1 to negatively regulate its binding to DNA and its transcriptional activity. The chain is WASH complex subunit homolog 1 from Caenorhabditis elegans.